Here is a 384-residue protein sequence, read N- to C-terminus: 23S rRNA (uracil(747)-C(5))-methyltransferase RlmC (384 aa).

Residues C7, C15, C18, and C94 each contribute to the [4Fe-4S] cluster site. 4 residues coordinate S-adenosyl-L-methionine: Q219, F248, E269, and N316. C343 functions as the Nucleophile in the catalytic mechanism.

This sequence belongs to the class I-like SAM-binding methyltransferase superfamily. RNA M5U methyltransferase family. RlmC subfamily.

It carries out the reaction uridine(747) in 23S rRNA + S-adenosyl-L-methionine = 5-methyluridine(747) in 23S rRNA + S-adenosyl-L-homocysteine + H(+). Functionally, catalyzes the formation of 5-methyl-uridine at position 747 (m5U747) in 23S rRNA. The chain is 23S rRNA (uracil(747)-C(5))-methyltransferase RlmC from Shewanella sp. (strain MR-7).